Consider the following 344-residue polypeptide: DNA polymerase IV (344 aa).

A UmuC domain is found at 2–183 (IMLIDFDYFF…IKINDIPGIG (182 aa)). Positions 6 and 105 each coordinate Mg(2+). The active site involves Glu106.

Belongs to the DNA polymerase type-Y family. Monomer. Mg(2+) serves as cofactor.

It is found in the cytoplasm. The catalysed reaction is DNA(n) + a 2'-deoxyribonucleoside 5'-triphosphate = DNA(n+1) + diphosphate. Its function is as follows. Poorly processive, error-prone DNA polymerase involved in untargeted mutagenesis. Copies undamaged DNA at stalled replication forks, which arise in vivo from mismatched or misaligned primer ends. These misaligned primers can be extended by PolIV. Exhibits no 3'-5' exonuclease (proofreading) activity. May be involved in translesional synthesis. This is DNA polymerase IV from Picrophilus torridus (strain ATCC 700027 / DSM 9790 / JCM 10055 / NBRC 100828 / KAW 2/3).